The sequence spans 156 residues: RNA polymerase sigma factor SigS (156 aa).

The Polymerase core binding signature appears at 29–44 (EYYQLLLIKMWQLSQI). A DNA-binding region (H-T-H motif) is located at residues 126 to 145 (QFEIAEIMSLSLSTIKLIKM).

This sequence belongs to the sigma-70 factor family.

Sigma factors are initiation factors that promote the attachment of RNA polymerase to specific initiation sites and are then released. Sigma-S contributes to the protection against external stress, thus playing a role in cellular fitness and survival. This is RNA polymerase sigma factor SigS (sigS) from Staphylococcus aureus (strain COL).